A 115-amino-acid polypeptide reads, in one-letter code: Dolichyl-diphosphooligosaccharide--protein glycosyltransferase subunit DAD1 (115 aa).

Residues 1–31 (MARSTGKDAQALFHSLRSAYAATPTTLKIID) lie on the Cytoplasmic side of the membrane. Residues 32–52 (LYVGFAVFTALIQVVYMAIVG) traverse the membrane as a helical segment. Topologically, residues 53–55 (SFP) are lumenal. The helical transmembrane segment at 56–76 (FNSFLSGVLSCVGTAVLAVCL) threads the bilayer. Residues 77–94 (RIQVNKDNKEFKDLPPER) lie on the Cytoplasmic side of the membrane. Residues 95–115 (AFADFVLCNLVLHLVIMNFLG) form a helical membrane-spanning segment.

Belongs to the DAD/OST2 family. As to quaternary structure, component of the oligosaccharyltransferase (OST) complex.

The protein resides in the endoplasmic reticulum membrane. The protein operates within protein modification; protein glycosylation. Functionally, subunit of the oligosaccharyl transferase (OST) complex that catalyzes the initial transfer of a defined glycan (Glc(3)Man(9)GlcNAc(2) in eukaryotes) from the lipid carrier dolichol-pyrophosphate to an asparagine residue within an Asn-X-Ser/Thr consensus motif in nascent polypeptide chains, the first step in protein N-glycosylation. N-glycosylation occurs cotranslationally and the complex associates with the Sec61 complex at the channel-forming translocon complex that mediates protein translocation across the endoplasmic reticulum (ER). All subunits are required for a maximal enzyme activity. In Citrus unshiu (Satsuma mandarin), this protein is Dolichyl-diphosphooligosaccharide--protein glycosyltransferase subunit DAD1 (DAD1).